The following is a 208-amino-acid chain: Uracil phosphoribosyltransferase (208 aa).

Residues Arg78, Arg103, and 130–138 contribute to the 5-phospho-alpha-D-ribose 1-diphosphate site; that span reads DPMFATGGT. Uracil is bound by residues Ile193 and 198 to 200; that span reads GDA. Asp199 is a binding site for 5-phospho-alpha-D-ribose 1-diphosphate.

The protein belongs to the UPRTase family. Mg(2+) is required as a cofactor.

It carries out the reaction UMP + diphosphate = 5-phospho-alpha-D-ribose 1-diphosphate + uracil. It functions in the pathway pyrimidine metabolism; UMP biosynthesis via salvage pathway; UMP from uracil: step 1/1. Allosterically activated by GTP. Functionally, catalyzes the conversion of uracil and 5-phospho-alpha-D-ribose 1-diphosphate (PRPP) to UMP and diphosphate. The sequence is that of Uracil phosphoribosyltransferase from Campylobacter jejuni subsp. jejuni serotype O:6 (strain 81116 / NCTC 11828).